Here is a 154-residue protein sequence, read N- to C-terminus: SsrA-binding protein (154 aa).

Belongs to the SmpB family.

The protein localises to the cytoplasm. Its function is as follows. Required for rescue of stalled ribosomes mediated by trans-translation. Binds to transfer-messenger RNA (tmRNA), required for stable association of tmRNA with ribosomes. tmRNA and SmpB together mimic tRNA shape, replacing the anticodon stem-loop with SmpB. tmRNA is encoded by the ssrA gene; the 2 termini fold to resemble tRNA(Ala) and it encodes a 'tag peptide', a short internal open reading frame. During trans-translation Ala-aminoacylated tmRNA acts like a tRNA, entering the A-site of stalled ribosomes, displacing the stalled mRNA. The ribosome then switches to translate the ORF on the tmRNA; the nascent peptide is terminated with the 'tag peptide' encoded by the tmRNA and targeted for degradation. The ribosome is freed to recommence translation, which seems to be the essential function of trans-translation. This chain is SsrA-binding protein, found in Staphylococcus aureus (strain USA300).